A 247-amino-acid polypeptide reads, in one-letter code: Mannose-P-dolichol utilization defect 1 protein (247 aa).

Residue Ala2 is modified to N-acetylalanine. Residues 39–105 form the PQ-loop 1 domain; that stretch reads KILLSKGLGL…NNFPFSSWGE (67 aa). 7 helical membrane passes run 46–66, 74–94, 103–123, 128–145, 151–171, 185–205, and 213–233; these read LGLGIVAGSLLVKLPQIFKIL, LSLQSVMLELVALTGTVIYSI, WGEALFLTLQTITICLLVLHY, VKGVALLACYATLLLALL, LAVVTMLQASNVPAVVVGKLL, LSAITVFMLFGGSLARIFTSV, and MAGVFVVSSLCNGLIAAQVLF. Residues 159 to 216 form the PQ-loop 2 domain; that stretch reads ASNVPAVVVGKLLQAATNYHNGHTGQLSAITVFMLFGGSLARIFTSVQETGDPLMAGV.

This sequence belongs to the MPDU1 (TC 2.A.43.3) family.

It is found in the membrane. Required for normal utilization of mannose-dolichol phosphate (Dol-P-Man) in the synthesis of N-linked and O-linked oligosaccharides and GPI anchors. This chain is Mannose-P-dolichol utilization defect 1 protein (MPDU1), found in Cricetulus griseus (Chinese hamster).